The sequence spans 83 residues: Neurotoxin LmNaTx10 (83 aa).

The N-terminal stretch at 1–19 (MNFLIFIAVASSLALGALC) is a signal peptide. One can recognise an LCN-type CS-alpha/beta domain in the interval 21–80 (KEGYPYDGNNCRYICFRNQYCDDLCKKLKGESGYCYGWNQSCYCYGLPDTEKTKPDKRCH). 4 cysteine pairs are disulfide-bonded: Cys-31–Cys-79, Cys-35–Cys-55, Cys-41–Cys-62, and Cys-45–Cys-64.

Belongs to the long (4 C-C) scorpion toxin superfamily. Sodium channel inhibitor family. Alpha subfamily. As to expression, expressed by the venom gland.

The protein resides in the secreted. Binds voltage-independently at site-3 of voltage-gated sodium channels (Nav) and inhibits the inactivation of the activated channels, thereby blocking neuronal transmission. This is Neurotoxin LmNaTx10 from Lychas mucronatus (Chinese swimming scorpion).